Consider the following 228-residue polypeptide: Ankyrin repeat domain-containing protein 46 (228 aa).

4 ANK repeats span residues 11–40 (QTSV…DPNI), 44–73 (RGRT…DLLA), 77–103 (QGNT…KIDI), and 107–138 (NGST…EVKG). The chain crosses the membrane as a helical span at residues 195–215 (VLLLLVVIALLSLGIAYYVSG).

It localises to the membrane. This chain is Ankyrin repeat domain-containing protein 46 (ankrd46), found in Danio rerio (Zebrafish).